The primary structure comprises 113 residues: MLVLFLLGTVFLLCPYWGELHDPIKATEIMCYECKKYHLGLCYGVMTSCSLKHKQSCAVENFYILTRKGQSMYHYSKLSCMTSCEDINFLGFTKRVELICCDHSNYCNLPEGV.

An N-terminal signal peptide occupies residues 1-26 (MLVLFLLGTVFLLCPYWGELHDPIKA). Residues 29–110 (IMCYECKKYH…CDHSNYCNLP (82 aa)) form the UPAR/Ly6 domain. 4 cysteine pairs are disulfide-bonded: Cys-31-Cys-57, Cys-34-Cys-42, Cys-49-Cys-80, and Cys-84-Cys-101.

It belongs to the PATE family. Isoform 1 and isoform 2 are expressed in prostate and testis. Isoform 2 is expressed in male and female brain at equivalent levels, in particular in cerebellum, cerebral cortex, corpus callosum, occipital, parrietal and temporal lobes, and pons, but not in amygdala, cerebral peduncle, hippocampus and thalamus.

It is found in the secreted. In Homo sapiens (Human), this protein is Prostate and testis expressed protein 2 (PATE2).